Here is a 293-residue protein sequence, read N- to C-terminus: Decaprenyl diphosphate synthase (293 aa).

The disordered stretch occupies residues 1–24 (MATTRGKKTYPQLPPAPDDYPTFP). Asp73 is an active-site residue. Asp73 contributes to the Mg(2+) binding site. Substrate is bound by residues 74–77 (GNGR), Trp78, Arg86, His90, and 118–120 (STE). Asn121 acts as the Proton acceptor in catalysis. Residues Trp122, Arg124, Arg241, and 247 to 249 (RAS) contribute to the substrate site. Glu260 is a binding site for Mg(2+).

This sequence belongs to the UPP synthase family. Homodimer. It depends on Mg(2+) as a cofactor.

The protein resides in the cell membrane. The enzyme catalyses (2Z,6E)-farnesyl diphosphate + 7 isopentenyl diphosphate = (2Z,6Z,10Z,14Z,18Z,22Z,26Z,30Z,34E)-decaprenyl diphosphate + 7 diphosphate. It carries out the reaction n isopentenyl diphosphate + (2E,6E)-farnesyl diphosphate = a di-trans,poly-cis-polyprenyl diphosphate + n diphosphate. Functionally, catalyzes the sequential condensation of isopentenyl diphosphate (IPP) in the cis configuration with (2Z,6E)-farnesyl diphosphate (Z-FPP or EZ-FPP) generating the 50 carbon product trans,polycis-decaprenyl diphosphate. When (2E,6E)-farnesyl diphosphate (E-FPP or EE-FPP) is used in vitro, both primary products decaprenyl diphosphate and heptaprenyl diphosphate are synthesized. It is probably due to the fact that M.smegmatis synthesizes both (2E,6E,10E)-geranylgeranyl diphosphate (EEE-GGPP) and (2E,6E,10Z)-geranylgeranyl diphosphate (EEZ-GGPP). Can also accept many different allylic substrates, including E-geranyl diphosphate (E-GPP), neryl diphosphate (NPP), and all-trans-geranyl-geranyl diphosphate. This is Decaprenyl diphosphate synthase (uppS) from Mycolicibacterium smegmatis (strain ATCC 700084 / mc(2)155) (Mycobacterium smegmatis).